Here is a 303-residue protein sequence, read N- to C-terminus: MATSRYEPVAEIGVGAYGTVYKARDPHSGHFVALKSVRVPNGGGAGGGLPISTVREVALLRRLEAFEHPNVVRLMDVCATARTDRETKVTLVFEHVDQDLRTYLDKAPPPGLPVETIKDLMRQFLRGLDFLHANCIVHRDLKPENILVTSGGTVKLADFGLARIYSYQMALTPVVVTLWYRAPEVLLQSTYATPVDMWSVGCIFAEMFRRKPLFCGNSEADQLGKIFDLIGLPPEDDWPRDVSLPRGAFSPRGPRPVQSVVPELEESGAQLLLEMLTFNPHKRISAFRALQHSYLHKAEGDAE.

Residue alanine 2 is modified to N-acetylalanine. One can recognise a Protein kinase domain in the interval 6 to 295 (YEPVAEIGVG…AFRALQHSYL (290 aa)). Residues 12 to 20 (IGVGAYGTV) and lysine 35 contribute to the ATP site. Residues 50–56 (PISTVRE) are required for binding D-type cyclins. Catalysis depends on aspartate 140, which acts as the Proton acceptor. The residue at position 172 (threonine 172) is a Phosphothreonine; by CAK.

This sequence belongs to the protein kinase superfamily. CMGC Ser/Thr protein kinase family. CDC2/CDKX subfamily. As to quaternary structure, component of the D-CDK4 complex, composed of CDK4 and some D-type G1 cyclin (CCND1, CCND2 or CCND3). Interacts directly in the complex with CCND1, CCND2 or CCND3. Interacts with SEI1 and ZNF655. Forms a ternary complex, cyclin D-CDK4-CDKN1B, involved in modulating CDK4 enzymatic activity. Interacts directly with CDKN1B (phosphorylated on 'Tyr-88' and 'Tyr-89'); the interaction allows assembly of the cyclin D-CDK4 complex, Thr-172 phosphorylation, nuclear translocation and enhances the cyclin D-CDK4 complex activity. CDK4 activity is either inhibited or enhanced depending on stoichiometry of complex. The non-tyrosine-phosphorylated form of CDKN1B prevents T-loop phosphorylation of CDK4 producing inactive CDK4. Interacts (unphosphorylated form) with CDK2. Also forms ternary complexes with CDKN1A or CDKN2A. Interacts directly with CDKN1A (via its N-terminal); the interaction promotes the assembly of the cyclin D-CDK4 complex, its nuclear translocation and promotes the cyclin D-dependent enzyme activity of CDK4. Interacts with CCND1; the interaction is prevented with the binding of CCND1 to INSM1 during cell cycle progression. Probably forms a complex composed of chaperones HSP90 and HSP70, co-chaperones CDC37, PPP5C, TSC1 and client protein TSC2, CDK4, AKT, RAF1 and NR3C1; this complex does not contain co-chaperones STIP1/HOP and PTGES3/p23. Interacts with CEBPA (when phosphorylated). Interacts with FNIP1 and FNIP2. In terms of processing, phosphorylation at Thr-172 is required for enzymatic activity. Phosphorylated, in vitro, at this site by CCNH-CDK7, but, in vivo, appears to be phosphorylated by a proline-directed kinase. In the cyclin D-CDK4-CDKN1B complex, this phosphorylation and consequent CDK4 enzyme activity, is dependent on the tyrosine phosphorylation state of CDKN1B. Thus, in proliferating cells, CDK4 within the complex is phosphorylated on Thr-172 in the T-loop. In resting cells, phosphorylation on Thr-172 is prevented by the non-tyrosine-phosphorylated form of CDKN1B.

The protein localises to the cytoplasm. The protein resides in the nucleus. Its subcellular location is the nucleus membrane. The enzyme catalyses L-seryl-[protein] + ATP = O-phospho-L-seryl-[protein] + ADP + H(+). The catalysed reaction is L-threonyl-[protein] + ATP = O-phospho-L-threonyl-[protein] + ADP + H(+). Its activity is regulated as follows. Both phosphorylation at Thr-172 and binding of a D-type cyclin are necessary for enzymatic activity. Full activation of the cyclin-D-CDK4 complex appears to require other factors such as recruitment of the substrate via a substrate recruitment motif, and/or formation of the CDKN1B ternary complex. Inhibited by INK4 family members. In resting cells, the non-tyrosine-phosphorylated form of CDKN1B prevents phosphorylation at Thr-172 and inactivation, while, in proliferating cells, tyrosine phosphorylation of CDKN1B allows phosphorylation of Thr-172 of CDK4 and subsequent activation. In terms of biological role, ser/Thr-kinase component of cyclin D-CDK4 (DC) complexes that phosphorylate and inhibit members of the retinoblastoma (RB) protein family including RB1 and regulate the cell-cycle during G(1)/S transition. Phosphorylation of RB1 allows dissociation of the transcription factor E2F from the RB/E2F complexes and the subsequent transcription of E2F target genes which are responsible for the progression through the G(1) phase. Hypophosphorylates RB1 in early G(1) phase. Cyclin D-CDK4 complexes are major integrators of various mitogenenic and antimitogenic signals. Also phosphorylates SMAD3 in a cell-cycle-dependent manner and represses its transcriptional activity. Component of the ternary complex, cyclin D/CDK4/CDKN1B, required for nuclear translocation and activity of the cyclin D-CDK4 complex. In Bos taurus (Bovine), this protein is Cyclin-dependent kinase 4 (CDK4).